A 196-amino-acid chain; its full sequence is uncharacterized protein (196 aa).

The segment covering 122 to 135 has biased composition (basic and acidic residues); that stretch reads SEIEKKQEPIERKT. The disordered stretch occupies residues 122-150; it reads SEIEKKQEPIERKTSTTTNTESNQEKPLR.

This is an uncharacterized protein from Leptospira interrogans.